The primary structure comprises 399 residues: MAKHCPNDDLSKIPDEELVRWSKEDLIRRLRRVDGEKMSLMLEHSNMMKDVNRSLQVHLHEIRNLKEINQKLQDDNQELRELCCFLDDDRQKGKKLSREWQRFGKFTASSVWKEVSTYQQKLKELEINQENVLRENAELKDIILMLDEDRNGAGSRSSIDSQSSLSNLNGGSGTVRDVGDGSSTSSGGSAGSPDHHHNHIHKTVEAKIGTVRRSMDDLSAPHHHRSIPAGLNDASSNYIRQLETKVRILEDNNNKLLSQPCSRYSLSKLSMKYNPGDLRALRKGMTLYHSESQLSSLPQRQEALLNGTGRLQTSESSPSTGFISSAQKPEAVVHAMKVLEVHDNLEKQLPEESEEDLSEKEKAIVREMCNVVWRKLGDATGTKPSLRQQLSGNQFKAPL.

2 coiled-coil regions span residues 52-84 and 113-144; these read NRSLQVHLHEIRNLKEINQKLQDDNQELRELCC and KEVSTYQQKLKELEINQENVLRENAELKDIIL. The segment at 151 to 199 is disordered; the sequence is NGAGSRSSIDSQSSLSNLNGGSGTVRDVGDGSSTSSGGSAGSPDHHHNH. A compositionally biased stretch (low complexity) spans 155-169; that stretch reads SRSSIDSQSSLSNLN.

The protein belongs to the CCDC85 family.

Its subcellular location is the cell junction. The protein localises to the tight junction. The protein resides in the adherens junction. In terms of biological role, may play a role in cell-cell adhesion and epithelium development through its interaction with proteins of the beta-catenin family. May play an important role in cortical development, especially in the maintenance of radial glia. The chain is Coiled-coil domain-containing protein 85C-B (ccdc85cb) from Danio rerio (Zebrafish).